The primary structure comprises 234 residues: Uridylate kinase (234 aa).

9-12 (KLSG) serves as a coordination point for ATP. Gly51 contributes to the UMP binding site. 2 residues coordinate ATP: Gly52 and Arg56. Residues Asp71 and 132 to 139 (CGNPFFTT) each bind UMP. Positions 159, 165, and 168 each coordinate ATP.

The protein belongs to the UMP kinase family. Homohexamer.

The protein localises to the cytoplasm. It carries out the reaction UMP + ATP = UDP + ADP. Its pathway is pyrimidine metabolism; CTP biosynthesis via de novo pathway; UDP from UMP (UMPK route): step 1/1. Inhibited by UTP. In terms of biological role, catalyzes the reversible phosphorylation of UMP to UDP. The chain is Uridylate kinase from Prochlorococcus marinus (strain MIT 9515).